The chain runs to 236 residues: C-&gt;U-editing enzyme APOBEC-1 (236 aa).

A CMP/dCMP-type deaminase domain is found at G10–L134. Residue H61 coordinates Zn(2+). The active-site Proton donor is E63. Zn(2+) is bound by residues C93 and C96.

It belongs to the cytidine and deoxycytidylate deaminase family. Homodimer. Interacts with A1CF; form an mRNA editing complex. Interacts with RBM47; form an mRNA editing complex. Found in a complex with CELF2/CUGBP2 and A1CF. Interacts with HNRPAB. Interacts with SYNCRIP. Zn(2+) is required as a cofactor.

It localises to the cytoplasm. The protein localises to the nucleus. It catalyses the reaction a cytidine in mRNA + H2O + H(+) = a uridine in mRNA + NH4(+). The catalysed reaction is cytidine(6666) in apoB mRNA + H2O + H(+) = uridine(6666) in apoB mRNA + NH4(+). Functionally, cytidine deaminase catalyzing the cytidine to uridine postranscriptional editing of a variety of mRNAs. Form complexes with cofactors that confer differential editing activity and selectivity. Responsible for the postranscriptional editing of a CAA codon for Gln to a UAA codon for stop in the apolipoprotein B mRNA. Also involved in CGA (Arg) to UGA (Stop) editing in the NF1 mRNA. May also play a role in the epigenetic regulation of gene expression by participating in DNA demethylation. The protein is C-&gt;U-editing enzyme APOBEC-1 of Pongo pygmaeus (Bornean orangutan).